A 282-amino-acid chain; its full sequence is uncharacterized protein (282 aa).

This is an uncharacterized protein from Mycoplasma pneumoniae (strain ATCC 29342 / M129 / Subtype 1) (Mycoplasmoides pneumoniae).